A 293-amino-acid chain; its full sequence is Small ribosomal subunit biogenesis GTPase RsgA (293 aa).

The CP-type G domain maps to Lys63–Leu223. Residues Ser112–Asp115 and Gly166–Ser174 each bind GTP. Positions 247, 252, 254, and 260 each coordinate Zn(2+).

This sequence belongs to the TRAFAC class YlqF/YawG GTPase family. RsgA subfamily. Monomer. Associates with 30S ribosomal subunit, binds 16S rRNA. Zn(2+) serves as cofactor.

It localises to the cytoplasm. Functionally, one of several proteins that assist in the late maturation steps of the functional core of the 30S ribosomal subunit. Helps release RbfA from mature subunits. May play a role in the assembly of ribosomal proteins into the subunit. Circularly permuted GTPase that catalyzes slow GTP hydrolysis, GTPase activity is stimulated by the 30S ribosomal subunit. This Bacillus cereus (strain ATCC 14579 / DSM 31 / CCUG 7414 / JCM 2152 / NBRC 15305 / NCIMB 9373 / NCTC 2599 / NRRL B-3711) protein is Small ribosomal subunit biogenesis GTPase RsgA.